We begin with the raw amino-acid sequence, 159 residues long: Probable chemoreceptor glutamine deamidase CheD 2 (159 aa).

Belongs to the CheD family.

The catalysed reaction is L-glutaminyl-[protein] + H2O = L-glutamyl-[protein] + NH4(+). Probably deamidates glutamine residues to glutamate on methyl-accepting chemotaxis receptors (MCPs), playing an important role in chemotaxis. The sequence is that of Probable chemoreceptor glutamine deamidase CheD 2 from Anaeromyxobacter dehalogenans (strain 2CP-C).